The chain runs to 258 residues: Tegument protein VP22 (258 aa).

The tract at residues 66 to 143 (VQPAARGRDR…RAPPGANAVA (78 aa)) is disordered. Over residues 77 to 118 (AAAGTTVAAPAAAPARRSSSRASSRPPRAAADPPVLRPATRG) the composition is skewed to low complexity. A Nuclear localization signal motif is present at residues 131–134 (PRPR). Positions 204–216 (LDRMLKSAAIRIL) match the Nuclear export signal motif. The tract at residues 234–258 (RAQRPAARGSTSGGESRLRGERARP) is disordered. Residues 249-258 (SRLRGERARP) show a composition bias toward basic and acidic residues.

This sequence belongs to the alphaherpesvirinae VP22 tegument protein family. Interacts with gE (via C-terminus); this interaction is necessary for the recruitment of VP22 to the Golgi and its packaging into virions. Interacts with gM (via C-terminus). Interacts with VP16; this interaction allows the formation of a tripartite complex composed of VP16, VP22 and UL41/VHS. Interacts with the capsid-binding protein UL16. Interacts with host CGAS. Post-translationally, highly phosphorylated in the host cell. Packaging is selective for underphosphorylated forms.

It is found in the virion tegument. It localises to the host cytoplasm. Its subcellular location is the host nucleus. The protein resides in the host Golgi apparatus. In terms of biological role, tegument protein that plays different roles during the time course of infection. Participates in both the accumulation of viral mRNAs and viral protein translation at late time of infection. Modulates the RNase activity of the virion host shutoff protein UL41 probably to ensure necessary levels of key cellular mRNAs and proteins. Plays a role in microtubule reorganization that occurs after viral infection by stabilizing microtubule network. Plays a role in the inhibition of host innate immune system by targeting the CGAS enzymatic activity which is the principal cytosolic DNA sensor that detects invading viral DNA. Acts by mediating disruption of liquid-like droplets in which CGAS is activated, thereby preventing CGAS activity. This chain is Tegument protein VP22, found in Bovine herpesvirus 1.1 (strain Cooper) (BoHV-1).